The chain runs to 289 residues: NAD(P)H-hydrate epimerase (289 aa).

The region spanning 71 to 277 is the YjeF N-terminal domain; that stretch reads AQTIDNELMS…SIVEKYNLKI (207 aa). Residue 122–126 participates in (6S)-NADPHX binding; that stretch reads NNGGD. Residues asparagine 123 and aspartate 185 each contribute to the K(+) site. Residues 189 to 195 and aspartate 218 each bind (6S)-NADPHX; that span reads GFSFRGE. A K(+)-binding site is contributed by serine 221.

This sequence belongs to the NnrE/AIBP family. Requires K(+) as cofactor.

The enzyme catalyses (6R)-NADHX = (6S)-NADHX. It carries out the reaction (6R)-NADPHX = (6S)-NADPHX. Catalyzes the epimerization of the S- and R-forms of NAD(P)HX, a damaged form of NAD(P)H that is a result of enzymatic or heat-dependent hydration. This is a prerequisite for the S-specific NAD(P)H-hydrate dehydratase to allow the repair of both epimers of NAD(P)HX. The protein is NAD(P)H-hydrate epimerase of Plasmodium knowlesi (strain H).